The following is a 297-amino-acid chain: 33 kDa chaperonin (297 aa).

Intrachain disulfides connect cysteine 232-cysteine 234 and cysteine 266-cysteine 269.

The protein belongs to the HSP33 family. In terms of processing, under oxidizing conditions two disulfide bonds are formed involving the reactive cysteines. Under reducing conditions zinc is bound to the reactive cysteines and the protein is inactive.

The protein resides in the cytoplasm. In terms of biological role, redox regulated molecular chaperone. Protects both thermally unfolding and oxidatively damaged proteins from irreversible aggregation. Plays an important role in the bacterial defense system toward oxidative stress. The sequence is that of 33 kDa chaperonin from Pseudomonas paraeruginosa (strain DSM 24068 / PA7) (Pseudomonas aeruginosa (strain PA7)).